Here is a 123-residue protein sequence, read N- to C-terminus: Small ribosomal subunit protein uS12 (123 aa).

Position 89 is a 3-methylthioaspartic acid (Asp89). The tract at residues 104-123 (TAGVQDRRQGRSKYGAKRPK) is disordered. Basic residues predominate over residues 113–123 (GRSKYGAKRPK).

This sequence belongs to the universal ribosomal protein uS12 family. In terms of assembly, part of the 30S ribosomal subunit. Contacts proteins S8 and S17. May interact with IF1 in the 30S initiation complex.

In terms of biological role, with S4 and S5 plays an important role in translational accuracy. Interacts with and stabilizes bases of the 16S rRNA that are involved in tRNA selection in the A site and with the mRNA backbone. Located at the interface of the 30S and 50S subunits, it traverses the body of the 30S subunit contacting proteins on the other side and probably holding the rRNA structure together. The combined cluster of proteins S8, S12 and S17 appears to hold together the shoulder and platform of the 30S subunit. In Oleidesulfovibrio alaskensis (strain ATCC BAA-1058 / DSM 17464 / G20) (Desulfovibrio alaskensis), this protein is Small ribosomal subunit protein uS12.